We begin with the raw amino-acid sequence, 147 residues long: Small ribosomal subunit protein uS12 (147 aa).

This sequence belongs to the universal ribosomal protein uS12 family. Part of the 30S ribosomal subunit.

With S4 and S5 plays an important role in translational accuracy. Located at the interface of the 30S and 50S subunits. The sequence is that of Small ribosomal subunit protein uS12 from Methanococcus maripaludis (strain C7 / ATCC BAA-1331).